The primary structure comprises 531 residues: Transcription factor LG2 (531 aa).

Disordered stretches follow at residues 115-154 and 195-220; these read RHQQ…ASSA and LHGG…KLVD. The span at 116-154 shows a compositional bias: polar residues; that stretch reads HQQQLHSGNSQSVGSTGTDSSSAQNTMSQMELVSPASSA. In terms of domain architecture, bZIP spans 220–264; that stretch reads DAKTERRLAQNREAARKSRLRKKAYVQQLETSRIRLQQVEHELQR. Positions 222–242 are basic motif; the sequence is KTERRLAQNREAARKSRLRKK. Residues 224-231 carry the Nuclear localization signal motif; sequence ERRLAQNR. The tract at residues 248–262 is leucine-zipper; it reads LETSRIRLQQVEHEL. Positions 285 to 499 constitute a DOG1 domain; the sequence is AAMFDMEYAR…RALSNLWASR (215 aa).

The protein belongs to the bZIP family. As to quaternary structure, binds DNA as a dimer. As to expression, expression in meristem/developing ligule regions.

It is found in the nucleus. In terms of biological role, required for the formation of the blade-sheath boundary in leaves. Promotes flowering. The sequence is that of Transcription factor LG2 from Zea mays (Maize).